Reading from the N-terminus, the 271-residue chain is Calretinin (271 aa).

EF-hand domains follow at residues 16 to 51 (LTAT…LEKA), 63 to 98 (NLGE…EENF), 107 to 142 (GSST…LLKK), 151 to 186 (KLQE…QENF), 195 to 230 (LTSE…LYEK), and 235 to 270 (MNIQ…SEPP). The Ca(2+) site is built by Asp29, Asp31, Asn33, Tyr35, Glu40, Asp76, Asn78, Asp80, Lys82, Glu87, Asp120, Asp122, Ser124, Tyr126, Glu131, Asp164, Asn166, Asp168, Lys170, Glu175, Asp208, Asp210, Ser212, Tyr214, and Glu219. Residue Tyr214 is modified to Phosphotyrosine.

It belongs to the calbindin family.

The protein resides in the synapse. It localises to the cell projection. The protein localises to the dendrite. Calcium-binding protein involved in calcium homeostasis and signal transduction. It plays a critical role in buffering intracellular calcium levels and modulating calcium-dependent signaling pathways. Predominantly expressed in specific neuronal populations, influences synaptic plasticity and neuronal excitability, contributing to learning and memory. During embryonic development, it facilitates neuronal differentiation and maturation. This chain is Calretinin (CALB2), found in Bos taurus (Bovine).